The primary structure comprises 129 residues: Small ribosomal subunit protein uS11 (129 aa).

It belongs to the universal ribosomal protein uS11 family. As to quaternary structure, part of the 30S ribosomal subunit. Interacts with proteins S7 and S18. Binds to IF-3.

Functionally, located on the platform of the 30S subunit, it bridges several disparate RNA helices of the 16S rRNA. Forms part of the Shine-Dalgarno cleft in the 70S ribosome. The sequence is that of Small ribosomal subunit protein uS11 from Nitratidesulfovibrio vulgaris (strain DSM 19637 / Miyazaki F) (Desulfovibrio vulgaris).